Consider the following 105-residue polypeptide: DNA-directed RNA polymerase subunit omega (105 aa).

The protein belongs to the RNA polymerase subunit omega family. As to quaternary structure, the RNAP catalytic core consists of 2 alpha, 1 beta, 1 beta' and 1 omega subunit. When a sigma factor is associated with the core the holoenzyme is formed, which can initiate transcription.

It catalyses the reaction RNA(n) + a ribonucleoside 5'-triphosphate = RNA(n+1) + diphosphate. Its function is as follows. Promotes RNA polymerase assembly. Latches the N- and C-terminal regions of the beta' subunit thereby facilitating its interaction with the beta and alpha subunits. The chain is DNA-directed RNA polymerase subunit omega from Streptococcus equi subsp. zooepidemicus (strain MGCS10565).